The following is a 441-amino-acid chain: Matrix extracellular phosphoglycoprotein (441 aa).

A signal peptide spans 1-24 (MTPEGLMKMQAVSVGLLLFSMTWA). Residue Asn-82 is glycosylated (N-linked (GlcNAc...) asparagine). Residues 137-441 (QSSPVKSKHT…SGSSSESHGD (305 aa)) are disordered. Over residues 142 to 156 (KSKHTKHTRQTRRST) the composition is skewed to basic residues. The dentonin stretch occupies residues 178–200 (PDLLVRGDNDVPPFSGDGQHFMH). The Cell attachment site signature appears at 183–185 (RGD). Residue Ser-192 is glycosylated (O-linked (Xyl...) (chondroitin sulfate) serine). Residues 211-223 (PESSTSRPLSGSS) show a composition bias toward polar residues. Residues 313 to 325 (SREKVKGGVEHAG) are compositionally biased toward basic and acidic residues. Composition is skewed to polar residues over residues 349–358 (GNQLTLTASQ) and 391–405 (GQNNLTPNKGMSQRR). The segment at 424–441 (RDSSESSSSGSSSESHGD) is ASARM motif; interaction with PHEX. Residues 428–441 (ESSSSGSSSESHGD) are compositionally biased toward low complexity.

Belongs to the PF07175/osteoregulin family. As to quaternary structure, interacts (via ASARM motif) with PHEX; the interaction is zinc-dependent. In terms of processing, phosphorylated on serine residues in the ASARM motif; the phosphorylation is important for the inhibition of bone mineralization. Cleaved by CTSB/cathepsin B; the cleavage is blocked by metalloprotease PHEX. As to expression, expressed in osteocytes (at protein level). Expressed by chondrocytes, specifically in the hypertrophic zone of the bone growth plate (at protein level). Expressed in osteoblasts in bone (at protein level). Expressed by osteoblasts within the metaphysis (at protein level). Expressed at low levels in white fat, brown fat, testes, brain and aorta. Expressed in the craniofacial complex (at protein level). Expressed in odontoblasts, ameloblasts and in predentin during tooth development (at protein level). Expressed in the kidney (at protein level). Expressed in osteocytes in mandibular condylar cartilage and tibial cartilage (at protein level). Expressed in salivary glands.

It is found in the secreted. The protein localises to the extracellular space. It localises to the extracellular matrix. Functionally, regulates renal phosphate and uric acid excretion. Regulates bone mineralization by osteoblasts and cartilage mineralization by chondrocytes. Regulates the mineralization of the extracellular matrix of the craniofacial complex, such as teeth, bone and cartilage. Increases dental pulp stem cell proliferation. The sequence is that of Matrix extracellular phosphoglycoprotein from Mus musculus (Mouse).